The following is a 260-amino-acid chain: Transcription repressor OFP13 (260 aa).

An OVATE domain is found at 150–211; the sequence is VAMESEDPYG…VSAFVDLLSG (62 aa).

As to expression, expressed in roots, rosette and cauline leaves, shoots, stems, flower buds and siliques.

Its subcellular location is the nucleus. Functionally, transcriptional repressor that regulates multiple aspects of plant growth and development through the regulation of BEL1-LIKE (BLH) and KNOX TALE (KNAT) homeodomain transcription factors. The sequence is that of Transcription repressor OFP13 (OFP13) from Arabidopsis thaliana (Mouse-ear cress).